A 341-amino-acid polypeptide reads, in one-letter code: Major histocompatibility complex class I-related protein 1 (341 aa).

A signal peptide spans 1-22 (MGELMAFLLPLIIVLMVKHSDS). The alpha-1 stretch occupies residues 23–109 (RTHSLRYFRL…KRLQRHYNHS (87 aa)). The interval 23-201 (RTHSLRYFRL…EYGKDILQRT (179 aa)) is antigen-binding cleft. The Extracellular segment spans residues 23–302 (RTHSLRYFRL…QESETIPLVM (280 aa)). Positions 29 and 31 each coordinate 8-(9H-purin-6-yl)-2-oxa-8-azabicyclo[3.3.1]nona-3,6-diene-4,6-dicarbaldehyde. 5-(2-oxoethylideneamino)-6-(D-ribitylamino)uracil-binding residues include Arg31, Ser46, and Lys65. Residues Arg31, Ser46, and Lys65 each contribute to the 5-(2-oxopropylideneamino)-6-(D-ribitylamino)uracil site. The 7-hydroxy-6-methyl-8-(1-D-ribityl)lumazine site is built by Arg31, Ser46, and Lys65. Residues Lys65 and His80 each coordinate 8-(9H-purin-6-yl)-2-oxa-8-azabicyclo[3.3.1]nona-3,6-diene-4,6-dicarbaldehyde. Residue Lys65 participates in 2-amino-4-oxopteridine-6-carbaldehyde binding. Lys65 lines the pyridoxal pocket. Asn107 carries N-linked (GlcNAc...) asparagine glycosylation. The interval 110-201 (GSHTYQRMIG…EYGKDILQRT (92 aa)) is alpha-2. Arg116 contacts 8-(9H-purin-6-yl)-2-oxa-8-azabicyclo[3.3.1]nona-3,6-diene-4,6-dicarbaldehyde. The 5-(2-oxoethylideneamino)-6-(D-ribitylamino)uracil site is built by Arg116, Tyr174, and Gln175. 5-(2-oxopropylideneamino)-6-(D-ribitylamino)uracil is bound by residues Arg116, Tyr174, and Gln175. 3 residues coordinate 7-hydroxy-6-methyl-8-(1-D-ribityl)lumazine: Arg116, Tyr174, and Gln175. Intrachain disulfides connect Cys120/Cys183 and Cys222/Cys278. An alpha-3 region spans residues 202 to 293 (EPPLVRVNRK…GVHMVLQVPQ (92 aa)). One can recognise an Ig-like C1-type domain in the interval 203–299 (PPLVRVNRKE…QVPQESETIP (97 aa)). The tract at residues 294 to 302 (ESETIPLVM) is connecting peptide. Residues 303 to 323 (KAVSGSIVLVIVLAGVGVLVW) traverse the membrane as a helical segment. Residues 324 to 341 (RRRPREQNGAIYLPTPDR) lie on the Cytoplasmic side of the membrane.

This sequence belongs to the MHC class I family. Heterotrimer that consists of MR1, B2M and metabolite antigen. Major classes of metabolite ligands presented by MR1 include riboflavin-related antigens, pyrimidines and ribityl lumazines, nucleobase adducts and folate derivatives. Forms reversible covalent Schiff base complexes with microbial pyrimidine-based metabolite, which serves as a molecular switch triggering complete folding, stable association with B2M and translocation of the ternary complex from endoplasmic reticulum to the plasma membrane. Alternatively, forms non-Schiff base complexes with ribityl lumazines. On antigen-presenting cells, the ternary complex interacts with TCR on MR1-restricted T cells. Interacts with TAPBP and TAPBPL chaperones in the endoplasmic reticulum. TAPBP associated or not with MHC class I peptide loading complex binds ligand-free MR1 or MR1-B2M complex, providing for stable MR1 pools ready for metabolite antigen processing. TAPBPL interacts with MR1 in a ligand-independent way; this interaction may stabilize MR1 pool and facilitate ligand loading and dissociation. Structurally, MR1-B2M heterodimer adopts a topology similar to classical MHC class I molecules, with alpha-1 and alpha-2 domains of MR1 forming the antigen-binding cleft composed of two alpha-helices resting on a floor of 7-stranded anti-parallel beta-pleated sheet. MR1-B2M heterodimer (via alpha-helices) interacts with TCR (via CDR domains). In terms of processing, N-glycosylated.

Its subcellular location is the cell membrane. The protein resides in the endoplasmic reticulum membrane. The protein localises to the golgi apparatus membrane. It is found in the early endosome membrane. It localises to the late endosome membrane. Its function is as follows. Antigen-presenting molecule specialized in displaying microbial pyrimidine-based metabolites to alpha-beta T cell receptors (TCR) on innate-type mucosal-associated invariant T (MAIT) cells. In complex with B2M preferentially presents riboflavin-derived metabolites to semi-invariant TCRs on MAIT cells, guiding immune surveillance of the microbial metabolome at mucosal epithelial barriers. Signature pyrimidine-based microbial antigens are generated via non-enzymatic condensation of metabolite intermediates of the riboflavin pathway with by-products arising from other metabolic pathways such as glycolysis. Typical potent antigenic metabolites are 5-(2-oxoethylideneamino)-6-D-ribitylaminouracil (5-OE-RU) and 5-(2-oxopropylideneamino)-6-D-ribitylaminouracil (5-OP-RU), products of condensation of 5-amino-6-D-ribityaminouracil (5-A-RU) with glyoxal or methylglyoxal by-products, respectively. May present microbial antigens to various MAIT cell subsets, providing for unique recognition of diverse microbes, including pathogens that do not synthesize riboflavin. Upon antigen recognition, elicits rapid innate-type MAIT cell activation to eliminate pathogenic microbes by directly killing infected cells. During T cell development, drives thymic selection and post-thymic terminal differentiation of MAIT cells in a process dependent on commensal microflora. Acts as an immune sensor of cancer cell metabolome. May present a tumor-specific or -associated metabolite essential for cancer cell survival to a pan-cancer TCR on a non-MAIT CD8-positive T cell clone, triggering T cell-mediated killing of a wide range of cancer cell types. May present tumor-enriched pyridoxal and pyridoxal 5'-phosphate antigens, enabling preferential recognition of cancer cells. Presents nucleobase carbonyl adducts generated during oxidative stress. Captures M3Ade, a nucleobase adduct composed of one adenine modified by a malondialdehyde trimer, for recognition by MR1-restricted T cell clones expressing a polyclonal TCR repertoire. This is Major histocompatibility complex class I-related protein 1 from Pan troglodytes (Chimpanzee).